The following is a 267-amino-acid chain: Probable ribosomal RNA small subunit methyltransferase A (267 aa).

5 residues coordinate S-adenosyl-L-methionine: Leu12, Gly37, Glu58, Asp83, and Asn100.

The protein belongs to the class I-like SAM-binding methyltransferase superfamily. rRNA adenine N(6)-methyltransferase family. RsmA subfamily.

The protein resides in the cytoplasm. Functionally, specifically dimethylates two adjacent adenosines in the loop of a conserved hairpin near the 3'-end of 16S rRNA in the 30S particle. May play a critical role in biogenesis of 30S subunits. This Methanococcus maripaludis (strain DSM 14266 / JCM 13030 / NBRC 101832 / S2 / LL) protein is Probable ribosomal RNA small subunit methyltransferase A.